A 510-amino-acid chain; its full sequence is UDP-N-acetylmuramoylalanine--D-glutamate ligase (510 aa).

Gly-138–Thr-144 serves as a coordination point for ATP. The interval Phe-294–Arg-316 is disordered.

This sequence belongs to the MurCDEF family.

The protein localises to the cytoplasm. The enzyme catalyses UDP-N-acetyl-alpha-D-muramoyl-L-alanine + D-glutamate + ATP = UDP-N-acetyl-alpha-D-muramoyl-L-alanyl-D-glutamate + ADP + phosphate + H(+). It functions in the pathway cell wall biogenesis; peptidoglycan biosynthesis. Its function is as follows. Cell wall formation. Catalyzes the addition of glutamate to the nucleotide precursor UDP-N-acetylmuramoyl-L-alanine (UMA). This is UDP-N-acetylmuramoylalanine--D-glutamate ligase from Bordetella pertussis (strain Tohama I / ATCC BAA-589 / NCTC 13251).